We begin with the raw amino-acid sequence, 142 residues long: Movement protein (142 aa).

The tract at residues 1-142 (MDLPEDQARF…LDRSESLSRY (142 aa)) is disordered. Polar residues-rich tracts occupy residues 9 to 22 (RFTNSYSLRTTSME) and 33 to 43 (LYQSASRSQMA). A compositionally biased stretch (low complexity) spans 50–62 (SIISRTSSWRTSP). Composition is skewed to polar residues over residues 74-95 (MNSILTSRTQQSSPKLTNSASP) and 113-124 (TTLQRTNSGFST). Residues 125-142 (KETEMPRLLDRSESLSRY) are compositionally biased toward basic and acidic residues.

Belongs to the luteoviruses movement protein family.

Its function is as follows. Transports viral genome to neighboring plant cells directly through plasmosdesmata, without any budding. The movement protein allows efficient cell to cell propagation, by bypassing the host cell wall barrier. This is Movement protein from Cicer arietinum (Chickpea).